The following is a 343-amino-acid chain: Large ribosomal subunit protein uL3 (343 aa).

Disordered regions lie at residues 1-31 (MGHR…TPRS) and 238-262 (KGSR…PGQM).

Belongs to the universal ribosomal protein uL3 family. As to quaternary structure, part of the 50S ribosomal subunit. Forms a cluster with proteins L14 and L24e.

Functionally, one of the primary rRNA binding proteins, it binds directly near the 3'-end of the 23S rRNA, where it nucleates assembly of the 50S subunit. This Sulfurisphaera tokodaii (strain DSM 16993 / JCM 10545 / NBRC 100140 / 7) (Sulfolobus tokodaii) protein is Large ribosomal subunit protein uL3.